Here is a 227-residue protein sequence, read N- to C-terminus: Peroxiredoxin-like 2A (227 aa).

The thioredoxin fold stretch occupies residues 13–111 (LWSISIGAFG…DQLGVPLYAV (99 aa)). Active-site redox-active residues include C84 and C87.

This sequence belongs to the peroxiredoxin-like PRXL2 family. PRXL2A subfamily.

The protein resides in the cytoplasm. In terms of biological role, involved in redox regulation of the cell. Acts as an antioxidant. The protein is Peroxiredoxin-like 2A (prxl2a) of Xenopus tropicalis (Western clawed frog).